A 369-amino-acid chain; its full sequence is tRNA-specific 2-thiouridylase MnmA (369 aa).

ATP-binding positions include 12-19 and Met38; that span reads GMSGGVDS. The tract at residues 98 to 100 is interaction with target base in tRNA; sequence NPD. Residue Cys103 is the Nucleophile of the active site. Cys103 and Cys200 are disulfide-bonded. ATP is bound at residue Gly128. Residues 150–152 form an interaction with tRNA region; it reads KDQ. Cys200 acts as the Cysteine persulfide intermediate in catalysis. Positions 312–313 are interaction with tRNA; sequence RY.

Belongs to the MnmA/TRMU family. Interacts with TusE.

It is found in the cytoplasm. It catalyses the reaction S-sulfanyl-L-cysteinyl-[protein] + uridine(34) in tRNA + AH2 + ATP = 2-thiouridine(34) in tRNA + L-cysteinyl-[protein] + A + AMP + diphosphate + H(+). Its function is as follows. Catalyzes the 2-thiolation of uridine at the wobble position (U34) of tRNA(Lys), tRNA(Glu) and tRNA(Gln), leading to the formation of s(2)U34, the first step of tRNA-mnm(5)s(2)U34 synthesis. Sulfur is provided by IscS, via a sulfur-relay system. Binds ATP and its substrate tRNAs. The polypeptide is tRNA-specific 2-thiouridylase MnmA (Sodalis glossinidius (strain morsitans)).